A 710-amino-acid chain; its full sequence is DNA ligase (710 aa).

The tract at residues 1–36 (MTSSSPRHADPDENPYVEAPPTDFEPVGALSEDEAT) is disordered. Residues 63–67 (DETYD), 111–112 (SI), and E147 contribute to the NAD(+) site. K149 (N6-AMP-lysine intermediate) is an active-site residue. Residues R170, E206, and K353 each contribute to the NAD(+) site. Zn(2+) is bound by residues C444, C447, C460, and C466. A BRCT domain is found at 623–710 (ETGDALDGLT…ERGVAWPPEE (88 aa)). Residues 657-689 (ATSSVSGNTDYLVAGESPGRSKRDDADAEGVPV) are disordered.

This sequence belongs to the NAD-dependent DNA ligase family. LigA subfamily. The cofactor is Mg(2+). Requires Mn(2+) as cofactor.

The enzyme catalyses NAD(+) + (deoxyribonucleotide)n-3'-hydroxyl + 5'-phospho-(deoxyribonucleotide)m = (deoxyribonucleotide)n+m + AMP + beta-nicotinamide D-nucleotide.. DNA ligase that catalyzes the formation of phosphodiester linkages between 5'-phosphoryl and 3'-hydroxyl groups in double-stranded DNA using NAD as a coenzyme and as the energy source for the reaction. It is essential for DNA replication and repair of damaged DNA. The chain is DNA ligase from Halorubrum lacusprofundi (strain ATCC 49239 / DSM 5036 / JCM 8891 / ACAM 34).